The chain runs to 30 residues: Kalata-B5 (30 aa).

A cross-link (cyclopeptide (Gly-Asn)) is located at residues 1-30 (GTPCGESCVYIPCISGVIGCSCTDKVCYLN). Cystine bridges form between C4–C20, C8–C22, and C13–C27.

Post-translationally, this is a cyclic peptide.

Its function is as follows. Probably participates in a plant defense mechanism. In Oldenlandia affinis, this protein is Kalata-B5.